The primary structure comprises 259 residues: Probable ATP-dependent transporter ycf16 (259 aa).

Residues 9-253 (LEVKNLKAQV…EIKGYDWLNE (245 aa)) form the ABC transporter domain. 41–48 (GPNGSGKS) is an ATP binding site.

The protein belongs to the ABC transporter superfamily. Ycf16 family.

It is found in the plastid. The protein localises to the cyanelle. In Cyanophora paradoxa, this protein is Probable ATP-dependent transporter ycf16 (ycf16).